Reading from the N-terminus, the 174-residue chain is Nucleoside-triphosphatase THEP1 (174 aa).

Residues 8–15 and 99–106 each bind ATP; these read GIPGIGKS and LIVIDEVG.

Belongs to the THEP1 NTPase family.

It carries out the reaction a ribonucleoside 5'-triphosphate + H2O = a ribonucleoside 5'-diphosphate + phosphate + H(+). Has nucleotide phosphatase activity towards ATP, GTP, CTP, TTP and UTP. May hydrolyze nucleoside diphosphates with lower efficiency. The protein is Nucleoside-triphosphatase THEP1 of Methanosarcina barkeri (strain Fusaro / DSM 804).